The following is a 1028-amino-acid chain: Formin-like protein 3 (1028 aa).

Residue Gly-2 is the site of N-myristoyl glycine attachment. A GBD/FH3 domain is found at 26-472 (MPMPEPCELE…EAFQRRCHLE (447 aa)). Residue Thr-95 is modified to Phosphothreonine. A Phosphoserine modification is found at Ser-174. The tract at residues 493–541 (ELSEGMPPSDLDLLAPAPPPEEVLPLPPPPAPPLPPPPPPLPDKCPPAP) is disordered. The span at 508-541 (PAPPPEEVLPLPPPPAPPLPPPPPPLPDKCPPAP) shows a compositional bias: pro residues. One can recognise an FH2 domain in the interval 561–951 (IKKPIKTKFR…MREKQLAQEA (391 aa)). In terms of domain architecture, DAD spans 986-1018 (YEGKDGTIEDIITVLKSVPFTARTAKRGSRFFC). Ser-1014 carries the post-translational modification Phosphoserine.

The protein belongs to the formin homology family. In terms of assembly, interacts with SRGAP2 (via SH3 domain). Expressed in endothelial cells.

The protein localises to the cytoplasm. The protein resides in the cell membrane. Plays a role in the regulation of cell morphology and cytoskeletal organization. Required in the control of cell shape and migration. Required for developmental angiogenesis. In this process, required for microtubule reorganization and for efficient endothelial cell elongation. In quiescent endothelial cells, triggers rearrangement of the actin cytoskeleton, but does not alter microtubule alignement. This is Formin-like protein 3 (FMNL3) from Homo sapiens (Human).